Consider the following 74-residue polypeptide: MKTFMIILLVICSILIVGRVEANDNKRKYLLLDPCLRPNAPPGCHRQPYKPRTPVNVYSRGCTTINRCRRVQNP.

An N-terminal signal peptide occupies residues 1 to 22; the sequence is MKTFMIILLVICSILIVGRVEA. Intrachain disulfides connect Cys-35–Cys-44 and Cys-62–Cys-68.

The protein belongs to the plant rapid alkalinization factor (RALF) family.

The protein localises to the secreted. Functionally, cell signaling peptide that may regulate plant stress, growth, and development. Mediates a rapid alkalinization of extracellular space by mediating a transient increase in the cytoplasmic Ca(2+) concentration leading to a calcium-dependent signaling events through a cell surface receptor and a concomitant activation of some intracellular mitogen-activated protein kinases. This Arabidopsis thaliana (Mouse-ear cress) protein is Protein RALF-like 25 (RALFL25).